Here is a 74-residue protein sequence, read N- to C-terminus: Mitotic-spindle organizing protein 1 (74 aa).

The protein belongs to the MOZART1 family. As to quaternary structure, part of the gamma-tubulin complex.

Its subcellular location is the cytoplasm. The protein resides in the cytoskeleton. The protein localises to the microtubule organizing center. It localises to the spindle pole body. Functionally, required for gamma-tubulin complex recruitment to the microtubule organizing center (MTOC). In Emericella nidulans (strain FGSC A4 / ATCC 38163 / CBS 112.46 / NRRL 194 / M139) (Aspergillus nidulans), this protein is Mitotic-spindle organizing protein 1.